The following is a 334-amino-acid chain: Phenazine-1-carboxylate N-methyltransferase (334 aa).

Residues Asp-198 and Arg-241 each contribute to the S-adenosyl-L-methionine site.

This sequence belongs to the class I-like SAM-binding methyltransferase superfamily. Cation-independent O-methyltransferase family. As to quaternary structure, homodimer in solution. Probably interacts transiently with PhzS.

It carries out the reaction phenazine-1-carboxylate + S-adenosyl-L-methionine = 5-methyl-phenazine-1-carboxylate + S-adenosyl-L-homocysteine. Its pathway is secondary metabolite biosynthesis; pyocyanine biosynthesis. In vitro, requires PhzS for activity. Its function is as follows. Involved in the biosynthesis of pyocyanine, a blue-pigmented phenazine derivative, which plays a role in virulence. Converts phenazine-1-carboxylate (PCA) to 5-methylphenazine-1-carboxylate (5-methyl-PCA). This chain is Phenazine-1-carboxylate N-methyltransferase, found in Pseudomonas aeruginosa (strain ATCC 15692 / DSM 22644 / CIP 104116 / JCM 14847 / LMG 12228 / 1C / PRS 101 / PAO1).